Here is a 699-residue protein sequence, read N- to C-terminus: MTAIRGGSRRAPGLALALLGGVLLGACHGDENAQVNALPGFVSGSVRKTAYDGASDDLLTAGLGKTGLGSDTRPGFANPAQPSAAELRRLAIYSNYRALVDITPNGGYGRFWGPNVDLAGNDTLGEGKIAGTEYLAYSDDGSGRKNVTLLVQVPASFDPANPCIVTATASGSRGVYGAIAAAGEWGLKRGCAVAYNDKGGGNGAHEIGTGVVTLIDGTLATASSAGSSSLFTASESSSTLAAFNSAFPNRYAYKHAHSQQNPEQDWGRVTLQAVEFAYWALNEQFGPVVDGTRHGIRYRPGDITTIAASVSNGGGSALAAAEQDTRGWITAVVVGEPQINVRMTPGVTVEQGGAPVPSFGRPLADYATLANLLQPCAAAAVAATGAPYLSALPMGVTQSIRTQRCATLAAAGLVSGADTASQASDALAQLYAAGYLADSDLLQAPMWDSQAMPAIAVTYANAYTRSRVTDNLCNFSFATTNPVTGAVAAPAVSPMTNLFGAGNGVPPTNGINLVFNGASGGVDHRLATPDASFAGAFCLRQLWTANQLGIGTNVDAVRVAANLQHKPAIIVHGRSDALVPVNHASRAYVAQNSATEGRASQLSFYEVTNGQHFDAFLSVPGFDTRFVPVHYYDEQALNLMWNHLKSGAPLPPSQVIRTVPRGGVPGAAPALSTANLPPIVQSPGANAIAVNAGVIDVPL.

Residues 1–33 (MTAIRGGSRRAPGLALALLGGVLLGACHGDENA) form the signal peptide. S311 functions as the Charge relay system in the catalytic mechanism.

Belongs to the D-(-)-3-hydroxybutyrate oligomer hydrolase family.

Its subcellular location is the secreted. It carries out the reaction (3R)-hydroxybutanoate dimer + H2O = 2 (R)-3-hydroxybutanoate + H(+). It participates in lipid metabolism; butanoate metabolism. In terms of biological role, participates in the degradation of poly-3-hydroxybutyrate (PHB). It works downstream of poly(3-hydroxybutyrate) depolymerase, hydrolyzing D(-)-3-hydroxybutyrate oligomers of various length (3HB-oligomers) into 3HB-monomers. This is D-(-)-3-hydroxybutyrate oligomer hydrolase from Burkholderia mallei (strain ATCC 23344).